Here is a 370-residue protein sequence, read N- to C-terminus: MVKPCWRIGAGMERSKINPTKVDGLTWYKDLGLHTFGEFSMAMIQANSVMEDQCQIESGPLTFNNPTVQGTFVGVYDGHGGPEASRFIADNIFPKLKKFASEGREISEQVISKAFAETDKDFLKTVTKQWPTNPQMASVGSCCLAGVICNGLVYIANTGDSRAVLGRSERGGVRAVQLSVEHNANLESARQELWSLHPNDPTILVMKHRLWRVKGVIQVTRSIGDAYLKRAEFNREPLLPKFRLPEHFTKPILSADPSVTITRLSPQDEFIILASDGLWEHLSNQEAVDIVHNSPRQGIARRLLKAALKEAAKKREMRYSDLTEIHPGVRRHFHDDITVIVVYLNPHPVKTNSWASPLSIRGGYPMHSTS.

A PPM-type phosphatase domain is found at 35–344 (TFGEFSMAMI…DDITVIVVYL (310 aa)). Residues Asp-77, Gly-78, Asp-276, and Asp-335 each coordinate Mn(2+).

It belongs to the PP2C family. In terms of assembly, interacts with SAUR19. Interacts with AHA2 at the plasma membrane. Requires Mg(2+) as cofactor. Mn(2+) is required as a cofactor.

It is found in the cell membrane. The enzyme catalyses O-phospho-L-seryl-[protein] + H2O = L-seryl-[protein] + phosphate. It carries out the reaction O-phospho-L-threonyl-[protein] + H2O = L-threonyl-[protein] + phosphate. In terms of biological role, dephosphorylates and represses plasma membrane H(+)-ATPases (PM H(+)-ATPases, e.g. AHA1 and AHA2), thus influencing negatively plant growth and fitness. Promotes the apical hook maintenance of etiolated seedlings. This Arabidopsis thaliana (Mouse-ear cress) protein is Probable protein phosphatase 2C 67.